The following is a 168-amino-acid chain: Transcriptional repressor NrdR (168 aa).

Residues 1–21 form a disordered region; it reads MQCPACRHTDSRVLESRSSES. Residues 3 to 34 fold into a zinc finger; the sequence is CPACRHTDSRVLESRSSESGRSVRRRRECLSC. Basic and acidic residues predominate over residues 7-20; it reads RHTDSRVLESRSSE. The ATP-cone domain occupies 49 to 139; that stretch reads ISVIKRNGDR…VYRQFRGVRD (91 aa).

Belongs to the NrdR family. Requires Zn(2+) as cofactor.

Functionally, negatively regulates transcription of bacterial ribonucleotide reductase nrd genes and operons by binding to NrdR-boxes. The polypeptide is Transcriptional repressor NrdR (Synechococcus elongatus (strain ATCC 33912 / PCC 7942 / FACHB-805) (Anacystis nidulans R2)).